We begin with the raw amino-acid sequence, 293 residues long: Small ribosomal subunit protein uS5 (293 aa).

The interval 1 to 56 (MADDAGAAGGPGGPGGPGMGNRGGFRGGFGSGIRGRGRGRGRGRGRGRGARGGKAE) is disordered. An N-acetylalanine modification is found at alanine 2. Positions 7 to 34 (AAGGPGGPGGPGMGNRGGFRGGFGSGIR) are enriched in gly residues. The segment covering 35–51 (GRGRGRGRGRGRGRGAR) has biased composition (basic residues). Residues lysine 54 and lysine 58 each participate in a glycyl lysine isopeptide (Lys-Gly) (interchain with G-Cter in ubiquitin) cross-link. Residues 102–165 (LKDEVLKIMP…ILAKLSIVPV (64 aa)) enclose the S5 DRBM domain. Phosphothreonine is present on threonine 252. Lysine 263 carries the post-translational modification N6-acetyllysine. Serine 264 carries the phosphoserine modification. Residue threonine 270 is modified to Phosphothreonine. Lysine 275 is modified (N6-acetyllysine; alternate). Lysine 275 participates in a covalent cross-link: Glycyl lysine isopeptide (Lys-Gly) (interchain with G-Cter in SUMO1); alternate. A Glycyl lysine isopeptide (Lys-Gly) (interchain with G-Cter in SUMO2); alternate cross-link involves residue lysine 275. A Glycyl lysine isopeptide (Lys-Gly) (interchain with G-Cter in ubiquitin); alternate cross-link involves residue lysine 275. Serine 281 carries the phosphoserine modification.

The protein belongs to the universal ribosomal protein uS5 family. Component of the small ribosomal subunit. Interacts with zinc finger protein ZNF277 (via zinc-finger domains); the interaction is direct; the interaction is extra-ribosomal. Interaction with ZNF277 competes with the binding of RPS2 to protein arginine methyltransferase PRMT3. In terms of processing, citrullinated by PADI4 in the Arg/Gly-rich region. Post-translationally, asymmetric arginine dimethylation by PRMT3 occurs at multiple sites in the Arg/Gly-rich region. Monoubiquitinated at Lys-54 and Lys-58 by RNF10 when a ribosome has stalled during translation, leading to its degradation by the proteasome. Deubiquitinated at Lys-54 and Lys-58 by USP10, preventing degradation by the proteasome and promoting 40S ribosome subunit recycling following ribosome dissociation.

It localises to the cytoplasm. It is found in the nucleus. Its subcellular location is the nucleolus. Functionally, component of the ribosome, a large ribonucleoprotein complex responsible for the synthesis of proteins in the cell. The small ribosomal subunit (SSU) binds messenger RNAs (mRNAs) and translates the encoded message by selecting cognate aminoacyl-transfer RNA (tRNA) molecules. The large subunit (LSU) contains the ribosomal catalytic site termed the peptidyl transferase center (PTC), which catalyzes the formation of peptide bonds, thereby polymerizing the amino acids delivered by tRNAs into a polypeptide chain. The nascent polypeptides leave the ribosome through a tunnel in the LSU and interact with protein factors that function in enzymatic processing, targeting, and the membrane insertion of nascent chains at the exit of the ribosomal tunnel. Plays a role in the assembly and function of the 40S ribosomal subunit. Mutations in this protein affects the control of translational fidelity. Involved in nucleolar processing of pre-18S ribosomal RNA and ribosome assembly. This is Small ribosomal subunit protein uS5 (RPS2) from Homo sapiens (Human).